The chain runs to 33 residues: Dermaseptin DS VIII-like peptide (33 aa).

Alanine amide is present on Ala33.

As to expression, expressed by the parotoid glands.

The protein resides in the secreted. Possesses a potent antimicrobial activity against bacteria, fungi and protozoa. Probably acts by disturbing membrane functions with its amphipathic structure. This chain is Dermaseptin DS VIII-like peptide, found in Phyllomedusa burmeisteri (Brazilian common walking leaf frog).